Reading from the N-terminus, the 349-residue chain is tRNA pseudouridine synthase D (349 aa).

A substrate-binding site is contributed by Phe-26. The Nucleophile role is filled by Asp-79. Asn-128 is a substrate binding site. Residues 154–302 (GVPNYFGSQR…VEGARRAILL (149 aa)) form the TRUD domain. Phe-328 contributes to the substrate binding site.

The protein belongs to the pseudouridine synthase TruD family.

It catalyses the reaction uridine(13) in tRNA = pseudouridine(13) in tRNA. In terms of biological role, responsible for synthesis of pseudouridine from uracil-13 in transfer RNAs. This is tRNA pseudouridine synthase D from Yersinia enterocolitica serotype O:8 / biotype 1B (strain NCTC 13174 / 8081).